The following is a 685-amino-acid chain: Exocyst complex component 8 (685 aa).

The PH domain occupies 151-251 (YLVYNGDLTE…WLEILEQTKK (101 aa)). The segment covering 254–263 (ALNEKQKQEE) has biased composition (basic and acidic residues). The tract at residues 254 to 273 (ALNEKQKQEETTPQLPVVPE) is disordered.

Belongs to the EXO84 family. In terms of assembly, the exocyst complex is composed of exoc1, exoc2, exoc3, exoc4, exoc5, exoc6, exoc7 and exoc8.

It is found in the cytoplasm. Its subcellular location is the perinuclear region. It localises to the cell projection. The protein resides in the growth cone. Component of the exocyst complex involved in the docking of exocytic vesicles with fusion sites on the plasma membrane. In Xenopus laevis (African clawed frog), this protein is Exocyst complex component 8 (exoc8).